The sequence spans 380 residues: Flap endonuclease 1 (380 aa).

Positions 1 to 104 are N-domain; the sequence is MGIHGLTKLI…AELEKRGEKR (104 aa). Asp-34 is a Mg(2+) binding site. Positions 47 and 70 each coordinate DNA. Residues Asp-86, Glu-158, Glu-160, Asp-179, and Asp-181 each coordinate Mg(2+). The tract at residues 122–253 is I-domain; that stretch reads NIDKFSKRLV…KRAIDLIKQH (132 aa). Residue Glu-158 participates in DNA binding. DNA-binding residues include Gly-231 and Asp-233. Asp-233 serves as a coordination point for Mg(2+). Residues 336-344 are interaction with PCNA; it reads TQGRLDSFF. Positions 351 to 380 are disordered; that stretch reads SSKRKEPELKGSAKKKQKTGATPGKFKKGK.

The protein belongs to the XPG/RAD2 endonuclease family. FEN1 subfamily. Interacts with PCNA. Three molecules of fen1 bind to one PCNA trimer with each molecule binding to one PCNA monomer. PCNA stimulates the nuclease activity without altering cleavage specificity. Requires Mg(2+) as cofactor. In terms of processing, phosphorylated. Phosphorylation upon DNA damage induces relocalization to the nuclear plasma.

It localises to the nucleus. Its subcellular location is the nucleolus. It is found in the nucleoplasm. The protein resides in the mitochondrion. In terms of biological role, structure-specific nuclease with 5'-flap endonuclease and 5'-3' exonuclease activities involved in DNA replication and repair. During DNA replication, cleaves the 5'-overhanging flap structure that is generated by displacement synthesis when DNA polymerase encounters the 5'-end of a downstream Okazaki fragment. It enters the flap from the 5'-end and then tracks to cleave the flap base, leaving a nick for ligation. Also involved in the long patch base excision repair (LP-BER) pathway, by cleaving within the apurinic/apyrimidinic (AP) site-terminated flap. Acts as a genome stabilization factor that prevents flaps from equilibrating into structures that lead to duplications and deletions. Also possesses 5'-3' exonuclease activity on nicked or gapped double-stranded DNA, and exhibits RNase H activity. Also involved in replication and repair of rDNA and in repairing mitochondrial DNA. The polypeptide is Flap endonuclease 1 (fen1) (Anoplopoma fimbria (Sablefish)).